Consider the following 215-residue polypeptide: 3-demethoxyubiquinol 3-hydroxylase (215 aa).

Fe cation contacts are provided by Glu64, Glu94, His97, Glu146, Glu178, and His181.

Belongs to the COQ7 family. Fe cation serves as cofactor.

The protein resides in the cell membrane. The enzyme catalyses a 5-methoxy-2-methyl-3-(all-trans-polyprenyl)benzene-1,4-diol + AH2 + O2 = a 3-demethylubiquinol + A + H2O. It functions in the pathway cofactor biosynthesis; ubiquinone biosynthesis. In terms of biological role, catalyzes the hydroxylation of 2-nonaprenyl-3-methyl-6-methoxy-1,4-benzoquinol during ubiquinone biosynthesis. The sequence is that of 3-demethoxyubiquinol 3-hydroxylase from Pseudomonas paraeruginosa (strain DSM 24068 / PA7) (Pseudomonas aeruginosa (strain PA7)).